The sequence spans 150 residues: UPF0178 protein PP_5221 (150 aa).

It belongs to the UPF0178 family.

The sequence is that of UPF0178 protein PP_5221 from Pseudomonas putida (strain ATCC 47054 / DSM 6125 / CFBP 8728 / NCIMB 11950 / KT2440).